We begin with the raw amino-acid sequence, 530 residues long: UDP-glucuronosyltransferase 2B15 (530 aa).

The first 23 residues, 1 to 23 (MSGKWISALLLLQISFCFKSGNC), serve as a signal peptide directing secretion. Asn316 is a glycosylation site (N-linked (GlcNAc...) asparagine). The chain crosses the membrane as a helical span at residues 494–510 (VIGFLLSCVAVTVVLAL).

The protein belongs to the UDP-glycosyltransferase family. Post-translationally, N-glycosylated. Liver. Lower levels seen in the kidney and testis.

It localises to the endoplasmic reticulum membrane. It catalyses the reaction glucuronate acceptor + UDP-alpha-D-glucuronate = acceptor beta-D-glucuronoside + UDP + H(+). The catalysed reaction is 17alpha-estradiol + UDP-alpha-D-glucuronate = 17alpha-estradiol 3-O-(beta-D-glucuronate) + UDP + H(+). It carries out the reaction 16alpha,17alpha-estriol + UDP-alpha-D-glucuronate = 16alpha,17alpha-estriol 3-O-(beta-D-glucuronate) + UDP + H(+). The enzyme catalyses 17beta-hydroxy-5alpha-androstan-3-one + UDP-alpha-D-glucuronate = 5alpha-dihydrotestosterone 17-O-(beta-D-glucuronate) + UDP + H(+). In terms of biological role, UDP-glucuronosyltransferase (UGT) that catalyzes phase II biotransformation reactions in which lipophilic substrates are conjugated with glucuronic acid to increase the metabolite's water solubility, thereby facilitating excretion into either the urine or bile. Essential for the elimination and detoxification of drugs, xenobiotics and endogenous compounds. Catalyzes the glucuronidation of endogenous steroid hormones such as androgens (testosterone, androsterone) and estrogens (estradiol, epiestradiol, estriol, catechol estrogens). Displays glucuronidation activity toward several classes of xenoblotic substrates, including phenolic compounds (eugenol, 4-nitrophenol, 4-hydroxybiphenyl) and phenylpropanoids (naringenin, coumarins). Catalyzes the glucuronidation of monoterpenoid alcohols such as borneol, menthol and isomenthol, a class of natural compounds used in essential oils. This chain is UDP-glucuronosyltransferase 2B15, found in Rattus norvegicus (Rat).